The following is a 284-amino-acid chain: Pantothenate synthetase (284 aa).

Residue 30-37 (MGNLHDGH) coordinates ATP. Catalysis depends on His-37, which acts as the Proton donor. Gln-61 provides a ligand contact to (R)-pantoate. Position 61 (Gln-61) interacts with beta-alanine. 149-152 (GEKD) provides a ligand contact to ATP. Gln-155 contacts (R)-pantoate. Residues Ile-178 and 186–189 (LSSR) each bind ATP.

Belongs to the pantothenate synthetase family. In terms of assembly, homodimer.

Its subcellular location is the cytoplasm. The catalysed reaction is (R)-pantoate + beta-alanine + ATP = (R)-pantothenate + AMP + diphosphate + H(+). Its pathway is cofactor biosynthesis; (R)-pantothenate biosynthesis; (R)-pantothenate from (R)-pantoate and beta-alanine: step 1/1. Functionally, catalyzes the condensation of pantoate with beta-alanine in an ATP-dependent reaction via a pantoyl-adenylate intermediate. The sequence is that of Pantothenate synthetase from Salmonella heidelberg (strain SL476).